The primary structure comprises 177 residues: Peptide methionine sulfoxide reductase MsrA (177 aa).

Cys15 is a catalytic residue.

This sequence belongs to the MsrA Met sulfoxide reductase family.

It catalyses the reaction L-methionyl-[protein] + [thioredoxin]-disulfide + H2O = L-methionyl-(S)-S-oxide-[protein] + [thioredoxin]-dithiol. It carries out the reaction [thioredoxin]-disulfide + L-methionine + H2O = L-methionine (S)-S-oxide + [thioredoxin]-dithiol. Has an important function as a repair enzyme for proteins that have been inactivated by oxidation. Catalyzes the reversible oxidation-reduction of methionine sulfoxide in proteins to methionine. The sequence is that of Peptide methionine sulfoxide reductase MsrA from Listeria welshimeri serovar 6b (strain ATCC 35897 / DSM 20650 / CCUG 15529 / CIP 8149 / NCTC 11857 / SLCC 5334 / V8).